The following is a 66-amino-acid chain: UPF0150 protein AF_0072.1 (66 aa).

This sequence belongs to the UPF0150 family.

The protein is UPF0150 protein AF_0072.1 of Archaeoglobus fulgidus (strain ATCC 49558 / DSM 4304 / JCM 9628 / NBRC 100126 / VC-16).